Reading from the N-terminus, the 274-residue chain is Large ribosomal subunit protein uL2cz/uL2cy (274 aa).

The tract at residues N224–L253 is disordered.

Belongs to the universal ribosomal protein uL2 family. Part of the 50S ribosomal subunit.

Its subcellular location is the plastid. The chain is Large ribosomal subunit protein uL2cz/uL2cy (rpl2-A) from Epifagus virginiana (Beechdrops).